The sequence spans 853 residues: DNA mismatch repair protein MutS (853 aa).

Residue 614 to 621 (GPNMGGKS) participates in ATP binding.

The protein belongs to the DNA mismatch repair MutS family.

This protein is involved in the repair of mismatches in DNA. It is possible that it carries out the mismatch recognition step. This protein has a weak ATPase activity. The sequence is that of DNA mismatch repair protein MutS from Escherichia coli O1:K1 / APEC.